Reading from the N-terminus, the 413-residue chain is Multidrug resistance protein MdtA (413 aa).

The signal sequence occupies residues 1–20 (MKGSNTFRWAIAIGVVVAAA). Disordered stretches follow at residues 31–57 (SPTAAPGVAAQAPHTAAAGRRGMRDGP) and 391–413 (EPQTTMADEKSPSRHEGQKGARA). Basic and acidic residues predominate over residues 397–413 (ADEKSPSRHEGQKGARA).

This sequence belongs to the membrane fusion protein (MFP) (TC 8.A.1) family. In terms of assembly, part of a tripartite efflux system composed of MdtA, MdtB and MdtC.

Its subcellular location is the cell inner membrane. The sequence is that of Multidrug resistance protein MdtA from Salmonella paratyphi C (strain RKS4594).